Reading from the N-terminus, the 46-residue chain is Large ribosomal subunit protein bL36B (46 aa).

It belongs to the bacterial ribosomal protein bL36 family.

In Enterobacter sp. (strain 638), this protein is Large ribosomal subunit protein bL36B.